The sequence spans 81 residues: Gamma-conotoxin-like TeA53 (81 aa).

Positions 1–19 (MQKLTILLLVAAVLMSTQA) are cleaved as a signal peptide. Positions 20 to 42 (LNQEQHQRAKINLLSKRKPPAER) are excised as a propeptide. 3 cysteine pairs are disulfide-bonded: C49–C63, C56–C67, and C62–C72.

Belongs to the conotoxin O2 superfamily. In terms of tissue distribution, expressed by the venom duct.

It is found in the secreted. Its function is as follows. Gamma-conotoxins may act on voltage-gated non-specific cation pacemaker channels (HCN). The chain is Gamma-conotoxin-like TeA53 from Conus textile (Cloth-of-gold cone).